Consider the following 645-residue polypeptide: Aspartate--tRNA ligase, mitochondrial (645 aa).

The transit peptide at Met-1–Phe-47 directs the protein to the mitochondrion. The residue at position 219 (Thr-219) is a Phosphothreonine. A Phosphoserine modification is found at Ser-242. The tract at residues Gln-244 to Lys-247 is aspartate. Residue Arg-266 participates in L-aspartate binding. Arg-266–Glu-268 provides a ligand contact to ATP. Lys-382 carries the post-translational modification N6-acetyllysine. Residue Glu-535 coordinates ATP. Arg-542 contributes to the L-aspartate binding site. Residue Gly-584 to Arg-587 coordinates ATP.

It belongs to the class-II aminoacyl-tRNA synthetase family. Type 1 subfamily. Homodimer.

Its subcellular location is the mitochondrion matrix. It is found in the mitochondrion membrane. It carries out the reaction tRNA(Asp) + L-aspartate + ATP = L-aspartyl-tRNA(Asp) + AMP + diphosphate. In terms of biological role, catalyzes the attachment of aspartate to tRNA(Asp) in a two-step reaction: aspartate is first activated by ATP to form Asp-AMP and then transferred to the acceptor end of tRNA(Asp). In Homo sapiens (Human), this protein is Aspartate--tRNA ligase, mitochondrial (DARS2).